Here is a 1200-residue protein sequence, read N- to C-terminus: Chromosome partition protein Smc (1200 aa).

33-40 (PNGSGKSN) contacts ATP. The segment at 90 to 109 (GENLSEPGANHNGNGNGAKI) is disordered. Positions 202 to 528 (EVQDREERCQ…AASQAQQEVQ (327 aa)) form a coiled coil. The SMC hinge domain occupies 542–656 (PGVCGLVAQL…VFDTLVNARN (115 aa)). Residues 692–1046 (TMVSEDTAEV…ERTELLLRIE (355 aa)) adopt a coiled-coil conformation.

This sequence belongs to the SMC family. In terms of assembly, homodimer.

The protein localises to the cytoplasm. Required for chromosome condensation and partitioning. The sequence is that of Chromosome partition protein Smc from Synechocystis sp. (strain ATCC 27184 / PCC 6803 / Kazusa).